Consider the following 282-residue polypeptide: Bifunctional protein FolD (282 aa).

NADP(+) contacts are provided by residues 164–166 (GRS) and Ser189.

The protein belongs to the tetrahydrofolate dehydrogenase/cyclohydrolase family. Homodimer.

The catalysed reaction is (6R)-5,10-methylene-5,6,7,8-tetrahydrofolate + NADP(+) = (6R)-5,10-methenyltetrahydrofolate + NADPH. The enzyme catalyses (6R)-5,10-methenyltetrahydrofolate + H2O = (6R)-10-formyltetrahydrofolate + H(+). It functions in the pathway one-carbon metabolism; tetrahydrofolate interconversion. In terms of biological role, catalyzes the oxidation of 5,10-methylenetetrahydrofolate to 5,10-methenyltetrahydrofolate and then the hydrolysis of 5,10-methenyltetrahydrofolate to 10-formyltetrahydrofolate. This is Bifunctional protein FolD from Anaeromyxobacter dehalogenans (strain 2CP-C).